We begin with the raw amino-acid sequence, 185 residues long: Ribosome-recycling factor (185 aa).

It belongs to the RRF family.

The protein resides in the cytoplasm. In terms of biological role, responsible for the release of ribosomes from messenger RNA at the termination of protein biosynthesis. May increase the efficiency of translation by recycling ribosomes from one round of translation to another. The polypeptide is Ribosome-recycling factor (Bacillus cytotoxicus (strain DSM 22905 / CIP 110041 / 391-98 / NVH 391-98)).